Here is a 161-residue protein sequence, read N- to C-terminus: DNA-binding protein inhibitor ID-4 (161 aa).

A bHLH domain is found at 52-104 (AAEAAADEPALCLQCDMNDCYSRLRRLVPTIPPNKKVSKVEILQHVIDYILDL). Positions 117 to 126 (QPPPPAPPHH) are enriched in pro residues. A disordered region spans residues 117 to 161 (QPPPPAPPHHPAGTCPAAPPRTPLTALNTDPAGAVNKQGDSILCR).

In terms of assembly, heterodimer with other HLH proteins.

Its subcellular location is the nucleus. In terms of biological role, transcriptional regulator (lacking a basic DNA binding domain) which negatively regulates the basic helix-loop-helix (bHLH) transcription factors by forming heterodimers and inhibiting their DNA binding and transcriptional activity. Implicated in regulating a variety of cellular processes, including cellular growth, senescence, differentiation, apoptosis, angiogenesis, and neoplastic transformation. This is DNA-binding protein inhibitor ID-4 (ID4) from Homo sapiens (Human).